Consider the following 86-residue polypeptide: Protein Tat (86 aa).

The segment at 1–24 (MEPVDPRLEPWKHPGSQPKTACTN) is interaction with human CREBBP. The interval 1 to 48 (MEPVDPRLEPWKHPGSQPKTACTNCYCKKCCFHCQVCFITKALGISYG) is transactivation. Zn(2+) is bound by residues cysteine 22, cysteine 25, and cysteine 27. The cysteine-rich stretch occupies residues 22–37 (CTNCYCKKCCFHCQVC). The residue at position 28 (lysine 28) is an N6-acetyllysine; by host PCAF. 4 residues coordinate Zn(2+): cysteine 30, histidine 33, cysteine 34, and cysteine 37. Residues 38–48 (FITKALGISYG) form a core region. The span at 48–59 (GRKKRRQRRRAH) shows a compositional bias: basic residues. A disordered region spans residues 48 to 86 (GRKKRRQRRRAHQNSQTHQASLSKQPTSQPRGDPTGPKE). The short motif at 49–57 (RKKRRQRRR) is the Nuclear localization signal, RNA-binding (TAR), and protein transduction element. Residues 49–86 (RKKRRQRRRAHQNSQTHQASLSKQPTSQPRGDPTGPKE) are interaction with the host capping enzyme RNGTT. Residues lysine 50 and lysine 51 each carry the N6-acetyllysine; by host EP300 and GCN5L2 modification. Residues arginine 52 and arginine 53 each carry the asymmetric dimethylarginine; by host PRMT6 modification. Polar residues predominate over residues 60 to 77 (QNSQTHQASLSKQPTSQP). Lysine 71 participates in a covalent cross-link: Glycyl lysine isopeptide (Lys-Gly) (interchain with G-Cter in ubiquitin). Positions 78-80 (RGD) match the Cell attachment site motif.

The protein belongs to the lentiviruses Tat family. In terms of assembly, interacts with host CCNT1. Associates with the P-TEFb complex composed at least of Tat, P-TEFb (CDK9 and CCNT1), TAR RNA, RNA Pol II. Recruits the HATs CREBBP, TAF1/TFIID, EP300, PCAF and GCN5L2. Interacts with host KAT5/Tip60; this interaction targets the latter to degradation. Interacts with the host deacetylase SIRT1. Interacts with host capping enzyme RNGTT; this interaction stimulates RNGTT. Binds to host KDR, and to the host integrins ITGAV/ITGB3 and ITGA5/ITGB1. Interacts with host KPNB1/importin beta-1 without previous binding to KPNA1/importin alpha-1. Interacts with EIF2AK2. Interacts with host nucleosome assembly protein NAP1L1; this interaction may be required for the transport of Tat within the nucleus, since the two proteins interact at the nuclear rim. Interacts with host C1QBP/SF2P32; this interaction involves lysine-acetylated Tat. Interacts with the host chemokine receptors CCR2, CCR3 and CXCR4. Interacts with host DPP4/CD26; this interaction may trigger an anti-proliferative effect. Interacts with host LDLR. Interacts with the host extracellular matrix metalloproteinase MMP1. Interacts with host PRMT6; this interaction mediates Tat's methylation. Interacts with, and is ubiquitinated by MDM2/Hdm2. Interacts with host PSMC3 and HTATIP2. Interacts with STAB1; this interaction may overcome SATB1-mediated repression of IL2 and IL2RA (interleukin) in T cells by binding to the same domain than HDAC1. Interacts (when acetylated) with human CDK13, thereby increasing HIV-1 mRNA splicing and promoting the production of the doubly spliced HIV-1 protein Nef. Interacts with host TBP; this interaction modulates the activity of transcriptional pre-initiation complex. Interacts with host RELA. Interacts with host PLSCR1; this interaction negatively regulates Tat transactivation activity by altering its subcellular distribution. Post-translationally, asymmetrical arginine methylation by host PRMT6 seems to diminish the transactivation capacity of Tat and affects the interaction with host CCNT1. In terms of processing, acetylation by EP300, CREBBP, GCN5L2/GCN5 and PCAF regulates the transactivation activity of Tat. EP300-mediated acetylation of Lys-50 promotes dissociation of Tat from the TAR RNA through the competitive binding to PCAF's bromodomain. In addition, the non-acetylated Tat's N-terminus can also interact with PCAF. PCAF-mediated acetylation of Lys-28 enhances Tat's binding to CCNT1. Lys-50 is deacetylated by SIRT1. Polyubiquitination by host MDM2 does not target Tat to degradation, but activates its transactivation function and fosters interaction with CCNT1 and TAR RNA. Post-translationally, phosphorylated by EIF2AK2 on serine and threonine residues adjacent to the basic region important for TAR RNA binding and function. Phosphorylation of Tat by EIF2AK2 is dependent on the prior activation of EIF2AK2 by dsRNA.

The protein resides in the host nucleus. Its subcellular location is the host nucleolus. The protein localises to the host cytoplasm. It is found in the secreted. In terms of biological role, transcriptional activator that increases RNA Pol II processivity, thereby increasing the level of full-length viral transcripts. Recognizes a hairpin structure at the 5'-LTR of the nascent viral mRNAs referred to as the transactivation responsive RNA element (TAR) and recruits the cyclin T1-CDK9 complex (P-TEFb complex) that will in turn hyperphosphorylate the RNA polymerase II to allow efficient elongation. The CDK9 component of P-TEFb and other Tat-activated kinases hyperphosphorylate the C-terminus of RNA Pol II that becomes stabilized and much more processive. Other factors such as HTATSF1/Tat-SF1, SUPT5H/SPT5, and HTATIP2 are also important for Tat's function. Besides its effect on RNA Pol II processivity, Tat induces chromatin remodeling of proviral genes by recruiting the histone acetyltransferases (HATs) CREBBP, EP300 and PCAF to the chromatin. This also contributes to the increase in proviral transcription rate, especially when the provirus integrates in transcriptionally silent region of the host genome. To ensure maximal activation of the LTR, Tat mediates nuclear translocation of NF-kappa-B by interacting with host RELA. Through its interaction with host TBP, Tat may also modulate transcription initiation. Tat can reactivate a latently infected cell by penetrating in it and transactivating its LTR promoter. In the cytoplasm, Tat is thought to act as a translational activator of HIV-1 mRNAs. Functionally, extracellular circulating Tat can be endocytosed by surrounding uninfected cells via the binding to several surface receptors such as CD26, CXCR4, heparan sulfate proteoglycans (HSPG) or LDLR. Neurons are rarely infected, but they internalize Tat via their LDLR. Through its interaction with nuclear HATs, Tat is potentially able to control the acetylation-dependent cellular gene expression. Modulates the expression of many cellular genes involved in cell survival, proliferation or in coding for cytokines or cytokine receptors. Tat plays a role in T-cell and neurons apoptosis. Tat induced neurotoxicity and apoptosis probably contribute to neuroAIDS. Circulating Tat also acts as a chemokine-like and/or growth factor-like molecule that binds to specific receptors on the surface of the cells, affecting many cellular pathways. In the vascular system, Tat binds to ITGAV/ITGB3 and ITGA5/ITGB1 integrins dimers at the surface of endothelial cells and competes with bFGF for heparin-binding sites, leading to an excess of soluble bFGF. The sequence is that of Protein Tat from Homo sapiens (Human).